The following is a 616-amino-acid chain: MTIKQTHSFQTEVSQLLHLMIHSLYSNKEIFLRELISNASDAVDKLKFKSLSDDTLIEGKEALQIHIDVNKDANTITITDNGIGMSEVEVNKNIGTIANSGTKKFLKSLNETQAQDSNLIGQFGVGFYSSFIVSDKVEIITRKAGSKSKKGTKWASTGKGKYSIESIDRPDFGTSVILHIKKDEKEFLDDYRLRNIISKYSDHITVPIMMVKVSEDNKDIEYERINKANAFWAQDKQDLKQKDYDEFYKSLTYDLEAPLTQLHNRVEGNIDYTSLLFIPSKSPFDIWEPKRKGGIKLYAKRVFIMEDNEALMPLYLRFVKGVIDTADLSLNLSREILQDNKVIKAIRKASVKRILSVLEKMAKNKPEDYATFWQEFGMLMKEGVVEDTINKDKIAKLLRFTTNKSKNATQTVTLEHYIKNIQKDQKAIYYITAETYETAKGSPHLENFNQKNIEVLLLSDRVDEWMVSNFREFDGIQLKSIAKGNLEDFDSKEEKKAKEEVAKNFEIVIEKMQKILDSQVKEIKISSRLSESPSCLVADENEMGGNMERIMKSLGQDIPDTKPILEINPTHSLVKKLKTKIDEDLVKVLFDQAVLSEGGQLKDPAEFVKRINKLIN.

The tract at residues 1–334 is a; substrate-binding; sequence MTIKQTHSFQ…TADLSLNLSR (334 aa). Residues 335–549 are b; that stretch reads EILQDNKVIK…ENEMGGNMER (215 aa). A c region spans residues 550-616; that stretch reads IMKSLGQDIP…FVKRINKLIN (67 aa).

This sequence belongs to the heat shock protein 90 family. As to quaternary structure, homodimer.

Its subcellular location is the cytoplasm. Functionally, molecular chaperone. Has ATPase activity. The polypeptide is Chaperone protein HtpG (Vesicomyosocius okutanii subsp. Calyptogena okutanii (strain HA)).